A 263-amino-acid polypeptide reads, in one-letter code: tRNA dimethylallyltransferase (263 aa).

Belongs to the IPP transferase family. Monomer. The cofactor is Mg(2+).

It catalyses the reaction adenosine(37) in tRNA + dimethylallyl diphosphate = N(6)-dimethylallyladenosine(37) in tRNA + diphosphate. In terms of biological role, catalyzes the transfer of a dimethylallyl group onto the adenine at position 37 in tRNAs that read codons beginning with uridine, leading to the formation of N6-(dimethylallyl)adenosine (i(6)A). The sequence is that of tRNA dimethylallyltransferase from Leifsonia xyli subsp. xyli (strain CTCB07).